Reading from the N-terminus, the 602-residue chain is Elongation factor 4 (602 aa).

Residues 7-189 (KYIRNFSIVA…AIVNKVPAPD (183 aa)) enclose the tr-type G domain. GTP contacts are provided by residues 19–24 (DHGKST) and 136–139 (NKID).

It belongs to the TRAFAC class translation factor GTPase superfamily. Classic translation factor GTPase family. LepA subfamily.

The protein resides in the cell membrane. The enzyme catalyses GTP + H2O = GDP + phosphate + H(+). Functionally, required for accurate and efficient protein synthesis under certain stress conditions. May act as a fidelity factor of the translation reaction, by catalyzing a one-codon backward translocation of tRNAs on improperly translocated ribosomes. Back-translocation proceeds from a post-translocation (POST) complex to a pre-translocation (PRE) complex, thus giving elongation factor G a second chance to translocate the tRNAs correctly. Binds to ribosomes in a GTP-dependent manner. The polypeptide is Elongation factor 4 (Clostridium botulinum (strain Kyoto / Type A2)).